The primary structure comprises 87 residues: UPF0367 protein SynRCC307_0258 (87 aa).

It belongs to the UPF0367 family.

In Synechococcus sp. (strain RCC307), this protein is UPF0367 protein SynRCC307_0258.